A 312-amino-acid chain; its full sequence is Transcription factor Ouib (312 aa).

The 76-residue stretch at 4 to 79 (IVCRVCGRQK…IKTQTKWLTI (76 aa)) folds into the ZAD domain. Zn(2+) contacts are provided by cysteine 6, cysteine 9, cysteine 52, and cysteine 55. 5 consecutive C2H2-type zinc fingers follow at residues 167-189 (YICE…MRKH), 195-217 (FGCK…HRVH), 223-245 (FACR…ERTH), 251-273 (YVCE…MVIH), and 279-303 (FRCD…SMMH).

In terms of tissue distribution, expressed predominantly in the prothoracic gland during embryonic and larval development.

It localises to the nucleus. Functionally, transcription factor required for ecdysteroid production in the prothoracic gland by activating transcription of the ecdysteroid biosynthesis gene spok. Binds to the 5'-AGCTTTATTATTTAG-3' DNA sequence in the spok enhancer region. The sequence is that of Transcription factor Ouib from Drosophila melanogaster (Fruit fly).